We begin with the raw amino-acid sequence, 520 residues long: Poly(A)-specific ribonuclease PNLDC1 (520 aa).

Aspartate 17, glutamate 19, aspartate 260, and aspartate 354 together coordinate Mg(2+). Residues 495-515 (VNCLLQVCGIVTAWALLAFIL) traverse the membrane as a helical segment.

The protein belongs to the CAF1 family. Mg(2+) serves as cofactor.

It is found in the endoplasmic reticulum membrane. The enzyme catalyses Exonucleolytic cleavage of poly(A) to 5'-AMP.. In terms of biological role, 3'-exoribonuclease that has a preference for poly(A) tails of mRNAs, thereby efficiently degrading poly(A) tails. Exonucleolytic degradation of the poly(A) tail is often the first step in the decay of eukaryotic mRNAs and is also used to silence certain maternal mRNAs translationally during oocyte maturation and early embryonic development. May act as a regulator of multipotency in embryonic stem cells. Is a critical factor for proper spermatogenesis, involved in pre-piRNAs processing to generate mature piRNAs. In Homo sapiens (Human), this protein is Poly(A)-specific ribonuclease PNLDC1.